A 264-amino-acid chain; its full sequence is Thymidylate synthase (264 aa).

Arg21 provides a ligand contact to dUMP. A (6R)-5,10-methylene-5,6,7,8-tetrahydrofolate-binding site is contributed by His51. 126–127 lines the dUMP pocket; that stretch reads RR. Cys146 serves as the catalytic Nucleophile. Residues 166 to 169, Asn177, and 207 to 209 each bind dUMP; these read RSVD and HLY. Asp169 provides a ligand contact to (6R)-5,10-methylene-5,6,7,8-tetrahydrofolate. Ser263 provides a ligand contact to (6R)-5,10-methylene-5,6,7,8-tetrahydrofolate.

Belongs to the thymidylate synthase family. Bacterial-type ThyA subfamily. As to quaternary structure, homodimer.

It localises to the cytoplasm. The enzyme catalyses dUMP + (6R)-5,10-methylene-5,6,7,8-tetrahydrofolate = 7,8-dihydrofolate + dTMP. It functions in the pathway pyrimidine metabolism; dTTP biosynthesis. In terms of biological role, catalyzes the reductive methylation of 2'-deoxyuridine-5'-monophosphate (dUMP) to 2'-deoxythymidine-5'-monophosphate (dTMP) while utilizing 5,10-methylenetetrahydrofolate (mTHF) as the methyl donor and reductant in the reaction, yielding dihydrofolate (DHF) as a by-product. This enzymatic reaction provides an intracellular de novo source of dTMP, an essential precursor for DNA biosynthesis. The polypeptide is Thymidylate synthase (Anoxybacillus flavithermus (strain DSM 21510 / WK1)).